The sequence spans 596 residues: Nitrite reductase (596 aa).

Residues 1–29 form the signal peptide; that stretch reads MRQRTPFARPGLLASAALALVLGPLAVAA. Positions 30-76 are N-terminal tail; sequence QEQAAPPKDPAAALEDHKTKTDNRYEPSLDNLAQQDVAALGAPEGIP. Histidine 46 serves as a coordination point for heme c. Residues tyrosine 54 and serine 57 each coordinate heme d1. The region spanning 77-162 is the Cytochrome c domain; that stretch reads ALSDAQYNEA…ANYLLLDPAA (86 aa). Heme c is bound by residues cysteine 94, cysteine 97, histidine 98, lysine 108, and tyrosine 122. Heme d1-binding residues include tryptophan 138, arginine 203, histidine 229, arginine 232, arginine 245, arginine 272, tyrosine 292, arginine 420, glutamine 536, and threonine 583. Positions 163-596 are D1-heme domain; the sequence is PPEFGMKEMR…NVYNTMTDTY (434 aa).

Homodimer. It depends on heme c as a cofactor. Requires heme as cofactor.

It is found in the periplasm. It carries out the reaction nitric oxide + Fe(III)-[cytochrome c] + H2O = Fe(II)-[cytochrome c] + nitrite + 2 H(+). The catalysed reaction is A + NH4(+) + H2O = hydroxylamine + AH2 + H(+). Functionally, inactivation of this cytochrome oxidase results in the loss of nitrite and nitric oxide reductase activities, but not of nitrous oxide reductase activity. The sequence is that of Nitrite reductase (nirS) from Paracoccus denitrificans (strain Pd 1222).